Consider the following 1071-residue polypeptide: Ubiquitin carboxyl-terminal hydrolase 7 (1071 aa).

The tract at residues 467 to 532 (KARLQQEQQQ…MPTTPEIPPP (66 aa)) is disordered. A compositionally biased stretch (low complexity) spans 471–480 (QQEQQQQQQQ). Polar residues predominate over residues 481–495 (PDSQDSFSAKESSTK). 2 stretches are compositionally biased toward pro residues: residues 497 to 507 (PEPPSWKPPDL) and 516 to 532 (PPPPPVSMPTTPEIPPP). Positions 609-1069 (TGLRNLGNTC…DVYVLFYERV (461 aa)) constitute a USP domain. Catalysis depends on C618, which acts as the Nucleophile. The segment at 913-942 (RMLGGSGKRSSSSTPFSTGGNDSNNSSDYK) is disordered. The span at 920-932 (KRSSSSTPFSTGG) shows a compositional bias: polar residues. H1014 (proton acceptor) is an active-site residue.

This sequence belongs to the peptidase C19 family.

It localises to the cytoplasm. It carries out the reaction Thiol-dependent hydrolysis of ester, thioester, amide, peptide and isopeptide bonds formed by the C-terminal Gly of ubiquitin (a 76-residue protein attached to proteins as an intracellular targeting signal).. In terms of biological role, involved in the sorting of ubiquitinated cargo proteins at the multivesicular body (MVB). The protein is Ubiquitin carboxyl-terminal hydrolase 7 (UBP7) of Saccharomyces cerevisiae (strain ATCC 204508 / S288c) (Baker's yeast).